Here is a 343-residue protein sequence, read N- to C-terminus: Cyclic AMP-AMP-AMP synthase (343 aa).

This sequence belongs to the CD-NTase family. D01 subfamily. Mg(2+) serves as cofactor.

The catalysed reaction is 3 ATP = 2',3',3'-c-tri-AMP + 3 diphosphate. In terms of biological role, cyclic nucleotide synthase (second messenger synthase) of a CBASS antivirus system. CBASS (cyclic oligonucleotide-based antiphage signaling system) provides immunity against bacteriophage. The CD-NTase protein synthesizes cyclic nucleotides in response to infection; these serve as specific second messenger signals. The signals activate a diverse range of effectors, leading to bacterial cell death and thus abortive phage infection. A type II-C(AAAA) CBASS system. Functionally, cyclic trinucleotide synthase that catalyzes the synthesis of 2',3',3'-cyclic AMP-AMP-AMP (2',3',3'-c-tri-AMP or 2'3'3'-cAAA) as the major product, as well as another cyclic AMP(4) 2'-5'-linked minor product that acts as a second messenger for cell signal transduction. This is Cyclic AMP-AMP-AMP synthase from Acinetobacter sp. (strain ATCC 27244 / 9458).